The primary structure comprises 193 residues: Large ribosomal subunit protein uL5 (193 aa).

The protein belongs to the universal ribosomal protein uL5 family. In terms of assembly, part of the 50S ribosomal subunit; part of the 5S rRNA/L5/L18/L25 subcomplex. Contacts the 5S rRNA and the P site tRNA. Forms a bridge to the 30S subunit in the 70S ribosome.

This is one of the proteins that bind and probably mediate the attachment of the 5S RNA into the large ribosomal subunit, where it forms part of the central protuberance. In the 70S ribosome it contacts protein S13 of the 30S subunit (bridge B1b), connecting the 2 subunits; this bridge is implicated in subunit movement. Contacts the P site tRNA; the 5S rRNA and some of its associated proteins might help stabilize positioning of ribosome-bound tRNAs. The polypeptide is Large ribosomal subunit protein uL5 (Renibacterium salmoninarum (strain ATCC 33209 / DSM 20767 / JCM 11484 / NBRC 15589 / NCIMB 2235)).